Consider the following 232-residue polypeptide: Transcriptional regulatory protein CpxR (232 aa).

Residues 3-115 (KILLVDDDRE…ELVARIRAIL (113 aa)) form the Response regulatory domain. 4-aspartylphosphate is present on Asp-51. A DNA-binding region (ompR/PhoB-type) is located at residues 131–230 (SPTLEVDALS…LRGRGYLMVS (100 aa)).

In terms of assembly, interacts with cognate sensor kinase CpxA. In terms of processing, phosphorylated by CpxA.

Its subcellular location is the cytoplasm. The two-component system is activated by envelope stress such as overexpression of some (misfolded) periplasmic proteins. Functionally, response regulator member of the two-component regulatory system CpxA/CpxR which responds to envelope stress response by activating or, in some cases, repressing expression of downstream genes. Binds to the promoter regions of various genes in vitro, including ompC, cpxP, ryhB and mrkA and, when CpxR is phosphorylated, pecO. Represses expression of the major pilin of type 3 fimbriae MrkA as well as that of type 1 fimbriae FimA. Repression of expression of MrkA appears to be indirect, mediated by activation of the iron homeostasis regulator RyhB. This Klebsiella pneumoniae subsp. pneumoniae (strain HS11286) protein is Transcriptional regulatory protein CpxR.